The following is a 498-amino-acid chain: uncharacterized protein (498 aa).

329–336 (GNPGTGKS) contributes to the ATP binding site.

It localises to the secreted. The protein resides in the cell wall. This is an uncharacterized protein from Mycobacterium tuberculosis (strain CDC 1551 / Oshkosh).